The primary structure comprises 601 residues: DNA ligase (601 aa).

Aspartate 258 contacts ATP. The active-site N6-AMP-lysine intermediate is lysine 260. The ATP site is built by arginine 265, arginine 280, glutamate 310, phenylalanine 350, arginine 427, and lysine 433.

Belongs to the ATP-dependent DNA ligase family. Requires Mg(2+) as cofactor. Ca(2+) serves as cofactor. Mn(2+) is required as a cofactor.

It carries out the reaction ATP + (deoxyribonucleotide)n-3'-hydroxyl + 5'-phospho-(deoxyribonucleotide)m = (deoxyribonucleotide)n+m + AMP + diphosphate.. DNA ligase that seals nicks in double-stranded DNA during DNA replication, DNA recombination and DNA repair. Also has low activity with dATP. Inactive with NAD(+), CTP, GTP, UTP, dCTP, dGTP or dTTP. This is DNA ligase from Saccharolobus shibatae (strain ATCC 51178 / DSM 5389 / JCM 8931 / NBRC 15437 / B12) (Sulfolobus shibatae).